The chain runs to 115 residues: Large ribosomal subunit protein uL22 (115 aa).

Belongs to the universal ribosomal protein uL22 family. Part of the 50S ribosomal subunit.

Functionally, this protein binds specifically to 23S rRNA; its binding is stimulated by other ribosomal proteins, e.g. L4, L17, and L20. It is important during the early stages of 50S assembly. It makes multiple contacts with different domains of the 23S rRNA in the assembled 50S subunit and ribosome. In terms of biological role, the globular domain of the protein is located near the polypeptide exit tunnel on the outside of the subunit, while an extended beta-hairpin is found that lines the wall of the exit tunnel in the center of the 70S ribosome. The chain is Large ribosomal subunit protein uL22 from Thioalkalivibrio sulfidiphilus (strain HL-EbGR7).